We begin with the raw amino-acid sequence, 469 residues long: ATP synthase subunit beta (469 aa).

ATP is bound at residue Gly-156–Thr-163.

It belongs to the ATPase alpha/beta chains family. In terms of assembly, F-type ATPases have 2 components, CF(1) - the catalytic core - and CF(0) - the membrane proton channel. CF(1) has five subunits: alpha(3), beta(3), gamma(1), delta(1), epsilon(1). CF(0) has three main subunits: a(1), b(2) and c(9-12). The alpha and beta chains form an alternating ring which encloses part of the gamma chain. CF(1) is attached to CF(0) by a central stalk formed by the gamma and epsilon chains, while a peripheral stalk is formed by the delta and b chains.

It localises to the cell membrane. The enzyme catalyses ATP + H2O + 4 H(+)(in) = ADP + phosphate + 5 H(+)(out). Produces ATP from ADP in the presence of a proton gradient across the membrane. The catalytic sites are hosted primarily by the beta subunits. The sequence is that of ATP synthase subunit beta from Lactococcus lactis subsp. lactis (strain IL1403) (Streptococcus lactis).